Here is a 170-residue protein sequence, read N- to C-terminus: RNA pyrophosphohydrolase (170 aa).

The Nudix hydrolase domain occupies Gly-6 to Lys-149. Residues Gly-38–Gly-59 carry the Nudix box motif.

This sequence belongs to the Nudix hydrolase family. RppH subfamily. Requires a divalent metal cation as cofactor.

In terms of biological role, accelerates the degradation of transcripts by removing pyrophosphate from the 5'-end of triphosphorylated RNA, leading to a more labile monophosphorylated state that can stimulate subsequent ribonuclease cleavage. The polypeptide is RNA pyrophosphohydrolase (Aliivibrio salmonicida (strain LFI1238) (Vibrio salmonicida (strain LFI1238))).